The following is a 191-amino-acid chain: uncharacterized protein (191 aa).

This is an uncharacterized protein from Histophilus somni (Haemophilus somnus).